The sequence spans 157 residues: Ribosomal RNA large subunit methyltransferase H (157 aa).

S-adenosyl-L-methionine contacts are provided by residues Gly104 and Leu123 to Leu128.

Belongs to the RNA methyltransferase RlmH family. Homodimer.

The protein resides in the cytoplasm. It catalyses the reaction pseudouridine(1915) in 23S rRNA + S-adenosyl-L-methionine = N(3)-methylpseudouridine(1915) in 23S rRNA + S-adenosyl-L-homocysteine + H(+). Its function is as follows. Specifically methylates the pseudouridine at position 1915 (m3Psi1915) in 23S rRNA. The polypeptide is Ribosomal RNA large subunit methyltransferase H (Nitrosococcus oceani (strain ATCC 19707 / BCRC 17464 / JCM 30415 / NCIMB 11848 / C-107)).